The primary structure comprises 347 residues: Endothelin receptor type B (347 aa).

At 1–7 (EIKETFK) the chain is on the extracellular side. The helical transmembrane segment at 8–32 (YINTVVSCLVFVLGIIGNSTLLRII) threads the bilayer. Over 33–43 (YKNKCMRNGPN) the chain is Cytoplasmic. A helical membrane pass occupies residues 44 to 69 (ILIASLALGDLLHIIIDIPISVYKLL). Residues 70–81 (AEDWPFGVEMCK) lie on the Extracellular side of the membrane. A disulfide bridge links Cys-80 with Cys-161. The helical transmembrane segment at 82 to 103 (LVPFIQKASVGITVLSLCALSI) threads the bilayer. Over 104–124 (DRYRAVASWSRIKGIGVPKWT) the chain is Cytoplasmic. The chain crosses the membrane as a helical span at residues 125–149 (AVEIVLIWVISVVLAVPEAIAFDMI). The Extracellular portion of the chain corresponds to 150–177 (TMEYRGKDLRICLLHPTQKTSFMMFYKQ). The chain crosses the membrane as a helical span at residues 178-202 (AKDWWLFSFYFCLPLAITALFYTLM). At 203-230 (TCEMLRKKSGMQIALNDHLKQRREVAKT) the chain is on the cytoplasmic side. Residues 231–256 (VFCLVLVFALCWLPLHLSRILKLTIY) traverse the membrane as a helical segment. The Extracellular segment spans residues 257 to 268 (DQKDPNRCELLS). Residues 269–295 (FFLVMDYIGINMASLNSCINPIALYLV) form a helical membrane-spanning segment. At 296–347 (SKRFQNCFKSCLCCWCQSKDLLSLEERQSCLKFKANDHGYDNFRSSNKYSSS) the chain is on the cytoplasmic side. 2 S-palmitoyl cysteine lipidation sites follow: Cys-309 and Cys-311.

Belongs to the G-protein coupled receptor 1 family. Endothelin receptor subfamily. EDNRB sub-subfamily.

The protein resides in the cell membrane. In terms of biological role, non-specific receptor for endothelin 1, 2, and 3. Mediates its action by association with G proteins that activate a phosphatidylinositol-calcium second messenger system. In Coturnix japonica (Japanese quail), this protein is Endothelin receptor type B (EDNRB).